The primary structure comprises 411 residues: Methylthioribose-1-phosphate isomerase (411 aa).

Ser2 bears the N-acetylserine mark. Asp280 functions as the Proton donor in the catalytic mechanism. Ser351 bears the Phosphoserine mark.

It belongs to the eIF-2B alpha/beta/delta subunits family. MtnA subfamily. In terms of assembly, homodimer.

The protein resides in the cytoplasm. Its subcellular location is the nucleus. The enzyme catalyses 5-(methylsulfanyl)-alpha-D-ribose 1-phosphate = 5-(methylsulfanyl)-D-ribulose 1-phosphate. Its pathway is amino-acid biosynthesis; L-methionine biosynthesis via salvage pathway; L-methionine from S-methyl-5-thio-alpha-D-ribose 1-phosphate: step 1/6. Functionally, catalyzes the interconversion of methylthioribose-1-phosphate (MTR-1-P) into methylthioribulose-1-phosphate (MTRu-1-P). This chain is Methylthioribose-1-phosphate isomerase, found in Saccharomyces cerevisiae (strain RM11-1a) (Baker's yeast).